A 206-amino-acid polypeptide reads, in one-letter code: Ras-related protein O-RAL (206 aa).

Residue 21 to 28 participates in GTP binding; sequence GSGGVGKS. The Effector region signature appears at 43-51; sequence YEPTKADSY. GTP-binding positions include 68–72 and 128–131; these read DTAGQ and NKSD. A compositionally biased stretch (basic and acidic residues) spans 180–189; it reads KMSENKDKNG. The disordered stretch occupies residues 180-206; sequence KMSENKDKNGKKSSRNKKSLRERCCIL. Cys203 bears the Cysteine methyl ester mark. Residue Cys203 is the site of S-geranylgeranyl cysteine attachment. Residues 204–206 constitute a propeptide, removed in mature form; the sequence is CIL.

Belongs to the small GTPase superfamily. Ras family.

It localises to the cell membrane. The enzyme catalyses GTP + H2O = GDP + phosphate + H(+). The polypeptide is Ras-related protein O-RAL (Diplobatis ommata (Ocellated electric ray)).